The primary structure comprises 829 residues: Cadherin-3 (829 aa).

The N-terminal stretch at 1-24 (MGLPRGPLASLLLLQVCWLQCAAS) is a signal peptide. The propeptide occupies 25 to 107 (EPCRAVFREA…SKRILRRHKR (83 aa)). 5 Cadherin domains span residues 108–215 (DWVV…KPKF), 216–328 (TQDT…APMF), 329–440 (DPQK…APVF), 441–546 (VPPS…DHGP), and 547–650 (VPEP…CPGP). Residues 108–654 (DWVVAPISVP…ETCPGPWKGG (547 aa)) are Extracellular-facing. An N-linked (GlcNAc...) asparagine glycan is attached at asparagine 200. Residue asparagine 566 is glycosylated (N-linked (GlcNAc...) asparagine). A helical membrane pass occupies residues 655–677 (FILPVLGAVLALLFLLLVLLLLV). The Cytoplasmic segment spans residues 678–829 (RKKRKIKEPL…ADMYGGGEDD (152 aa)).

As to quaternary structure, interacts with CDCP1 and CTNNB1. In terms of tissue distribution, expressed in some normal epithelial tissues and in some carcinoma cell lines.

It localises to the cell membrane. Its function is as follows. Cadherins are calcium-dependent cell adhesion proteins. They preferentially interact with themselves in a homophilic manner in connecting cells; cadherins may thus contribute to the sorting of heterogeneous cell types. The chain is Cadherin-3 (CDH3) from Homo sapiens (Human).